Here is a 441-residue protein sequence, read N- to C-terminus: 2-oxoisovalerate dehydrogenase subunit alpha, mitochondrial (441 aa).

A mitochondrion-targeting transit peptide spans 1–17; it reads MISQSYRILSRISRNNE. A thiamine diphosphate-binding site is contributed by 145-147; the sequence is QYR. K(+) contacts are provided by Ser-194, Thr-199, and Gln-200.

It belongs to the BCKDHA family. In terms of assembly, heterotetramer of alpha and beta chains. Requires thiamine diphosphate as cofactor.

Its subcellular location is the mitochondrion matrix. The catalysed reaction is N(6)-[(R)-lipoyl]-L-lysyl-[protein] + 3-methyl-2-oxobutanoate + H(+) = N(6)-[(R)-S(8)-2-methylpropanoyldihydrolipoyl]-L-lysyl-[protein] + CO2. Functionally, the branched-chain alpha-keto dehydrogenase complex catalyzes the overall conversion of alpha-keto acids to acyl-CoA and CO(2). It contains multiple copies of three enzymatic components: branched-chain alpha-keto acid decarboxylase (E1), lipoamide acyltransferase (E2) and lipoamide dehydrogenase (E3). In Dictyostelium discoideum (Social amoeba), this protein is 2-oxoisovalerate dehydrogenase subunit alpha, mitochondrial (bkdA).